The sequence spans 269 residues: Propanediol uptake facilitator PduF (269 aa).

The next 2 membrane-spanning stretches (helical) occupy residues isoleucine 10–leucine 30 and isoleucine 42–glycine 62. The NPA 1 motif lies at asparagine 66–alanine 68. 3 helical membrane-spanning segments follow: residues isoleucine 69–valine 89, valine 143–alanine 163, and leucine 179–alanine 199. The NPA 2 motif lies at asparagine 201–alanine 203. A helical transmembrane segment spans residues isoleucine 228–isoleucine 248.

This sequence belongs to the MIP/aquaporin (TC 1.A.8) family.

It is found in the cell inner membrane. Probably facilitates diffusion of 1,2-propanediol (1,2-PD) into the cell. The protein is Propanediol uptake facilitator PduF of Citrobacter freundii.